Reading from the N-terminus, the 125-residue chain is Large ribosomal subunit protein bL17 (125 aa).

The protein belongs to the bacterial ribosomal protein bL17 family. As to quaternary structure, part of the 50S ribosomal subunit. Contacts protein L32.

This chain is Large ribosomal subunit protein bL17, found in Syntrophus aciditrophicus (strain SB).